The sequence spans 387 residues: Monomeric sarcosine oxidase (387 aa).

6 to 36 (DVIVVGAGSMGMAAGYYLAKQGVKTLLVDSF) serves as a coordination point for FAD. Residue cysteine 316 is modified to S-8alpha-FAD cysteine.

The protein belongs to the MSOX/MTOX family. MSOX subfamily. As to quaternary structure, monomer. The cofactor is FAD.

The protein localises to the cytoplasm. It carries out the reaction sarcosine + O2 + H2O = formaldehyde + glycine + H2O2. Functionally, catalyzes the oxidative demethylation of sarcosine. This chain is Monomeric sarcosine oxidase (soxA), found in Bacillus sp. (strain NS-129).